Consider the following 477-residue polypeptide: Ectonucleotide pyrophosphatase/phosphodiesterase family member 5 (477 aa).

An N-terminal signal peptide occupies residues 1-24; that stretch reads MTSKFLLVSFILAALSLSTTFSLQ. Positions 36 and 72 each coordinate Zn(2+). Thr-72 serves as the catalytic Nucleophile. N-linked (GlcNAc...) asparagine glycans are attached at residues Asn-101 and Asn-158. Zn(2+) is bound by residues Asp-191, His-195, Asp-238, and His-239. N-linked (GlcNAc...) asparagine glycosylation is found at Asn-292 and Asn-329. His-339 contributes to the Zn(2+) binding site. Asn-362, Asn-369, Asn-382, and Asn-389 each carry an N-linked (GlcNAc...) asparagine glycan. A helical transmembrane segment spans residues 432 to 452; it reads PYFIGVSLGSIIVIVFFVIFI.

The protein belongs to the nucleotide pyrophosphatase/phosphodiesterase family. Zn(2+) is required as a cofactor. In terms of processing, N-glycosylated.

The protein resides in the secreted. The protein localises to the membrane. Its function is as follows. Can hydrolyze NAD but cannot hydrolyze nucleotide di- and triphosphates. Lacks lysopholipase D activity. May play a role in neuronal cell communication. This Homo sapiens (Human) protein is Ectonucleotide pyrophosphatase/phosphodiesterase family member 5.